The following is a 162-amino-acid chain: Transcription elongation factor GreA (162 aa).

Positions 1 to 28 (MQKEPMLEETYRKLSEELEQLKSVERGV) form a coiled coil.

This sequence belongs to the GreA/GreB family.

In terms of biological role, necessary for efficient RNA polymerase transcription elongation past template-encoded arresting sites. The arresting sites in DNA have the property of trapping a certain fraction of elongating RNA polymerases that pass through, resulting in locked ternary complexes. Cleavage of the nascent transcript by cleavage factors such as GreA or GreB allows the resumption of elongation from the new 3'terminus. GreA releases sequences of 2 to 3 nucleotides. The sequence is that of Transcription elongation factor GreA from Sulfurovum sp. (strain NBC37-1).